We begin with the raw amino-acid sequence, 436 residues long: 3-ketoacyl-CoA thiolase (436 aa).

Catalysis depends on Cys-99, which acts as the Acyl-thioester intermediate. Catalysis depends on proton acceptor residues His-392 and Cys-422.

The protein belongs to the thiolase-like superfamily. Thiolase family. In terms of assembly, heterotetramer of two alpha chains (FadJ) and two beta chains (FadI).

The protein localises to the cytoplasm. The catalysed reaction is an acyl-CoA + acetyl-CoA = a 3-oxoacyl-CoA + CoA. The protein operates within lipid metabolism; fatty acid beta-oxidation. Catalyzes the final step of fatty acid oxidation in which acetyl-CoA is released and the CoA ester of a fatty acid two carbons shorter is formed. This chain is 3-ketoacyl-CoA thiolase, found in Alteromonas mediterranea (strain DSM 17117 / CIP 110805 / LMG 28347 / Deep ecotype).